Consider the following 157-residue polypeptide: Eukaryotic translation initiation factor 5A-1 (157 aa).

Lysine 52 is modified (hypusine). Residues serine 75 and serine 77 each carry the phosphoserine modification. Phosphothreonine is present on threonine 78.

This sequence belongs to the eIF-5A family. Post-translationally, lys-52 undergoes hypusination, a unique post-translational modification that consists in the addition of a butylamino group from spermidine to lysine side chain, leading to the formation of the unusual amino acid hypusine. eIF-5As are the only known proteins to undergo this modification, which is essential for their function.

Its subcellular location is the cytoplasm. In terms of biological role, translation factor that promotes translation elongation and termination, particularly upon ribosome stalling at specific amino acid sequence contexts. Binds between the exit (E) and peptidyl (P) site of the ribosome and promotes rescue of stalled ribosome: specifically required for efficient translation of polyproline-containing peptides as well as other motifs that stall the ribosome. Acts as a ribosome quality control (RQC) cofactor by joining the RQC complex to facilitate peptidyl transfer during CAT tailing step. The chain is Eukaryotic translation initiation factor 5A-1 (tif51a) from Schizosaccharomyces pombe (strain 972 / ATCC 24843) (Fission yeast).